A 377-amino-acid polypeptide reads, in one-letter code: MSWSFLTRLLEEINNHSTFVGKIWLTVLIIFRIVLTAVGGESIYYDEQSKFTCNTHQPGCENVCYDAFAPLSHVRFWVFQIILITTPSIMYLGFAMHRIARQPDEQIRRLEKTKSKKRAPIIHRGAMRDYEEAEDNQEEDPMICEEEEPEKDSEKGDKKKHDGRRRIKQDGLMKVYVLQLLFRSVFEVGFLMGQYVLYGFEVIPFFVCSRNPCPHTVDCFVSRPTEKTIFLLIMYAVSALCLFLNLCELFHLGIGGIRDALRQKRKEIQESRKKKPSAPPNYHSVLKKGKLPNGKPVFPGNGVSEGFEMPVHELDRLRQHLKLAQEHLDLAFHLNPSADIAHASRSSSPEANSIAAEQNRLNLAQEKGVGSREKSGL.

At 1-18 (MSWSFLTRLLEEINNHST) the chain is on the cytoplasmic side. The chain crosses the membrane as a helical span at residues 19–39 (FVGKIWLTVLIIFRIVLTAVG). Over 40–75 (GESIYYDEQSKFTCNTHQPGCENVCYDAFAPLSHVR) the chain is Extracellular. Residues 76 to 96 (FWVFQIILITTPSIMYLGFAM) traverse the membrane as a helical segment. Residues 97 to 174 (HRIARQPDEQ…RRIKQDGLMK (78 aa)) are Cytoplasmic-facing. The disordered stretch occupies residues 129 to 163 (DYEEAEDNQEEDPMICEEEEPEKDSEKGDKKKHDG). Residues 131–151 (EEAEDNQEEDPMICEEEEPEK) show a composition bias toward acidic residues. A helical transmembrane segment spans residues 175-197 (VYVLQLLFRSVFEVGFLMGQYVL). Over 198–228 (YGFEVIPFFVCSRNPCPHTVDCFVSRPTEKT) the chain is Extracellular. Residues 229–249 (IFLLIMYAVSALCLFLNLCEL) traverse the membrane as a helical segment. Over 250–377 (FHLGIGGIRD…GVGSREKSGL (128 aa)) the chain is Cytoplasmic. 2 disordered regions span residues 266-286 (KEIQ…HSVL) and 341-377 (AHAS…KSGL). Positions 344 to 362 (SRSSSPEANSIAAEQNRLN) are enriched in polar residues.

It belongs to the connexin family. Gamma-type subfamily. In terms of assembly, a connexon is composed of a hexamer of connexins.

It localises to the cell membrane. Its subcellular location is the cell junction. The protein localises to the gap junction. Functionally, one gap junction consists of a cluster of closely packed pairs of transmembrane channels, the connexons, through which materials of low MW diffuse from one cell to a neighboring cell. This Xenopus laevis (African clawed frog) protein is Gap junction gamma-1 protein (gjc1).